Consider the following 150-residue polypeptide: Molybdopterin synthase catalytic subunit (150 aa).

Residues 34–36 (HVR), Thr44, 100–101 (HR), Lys116, and 123–125 (KKE) each bind substrate.

It belongs to the MoaE family. As to quaternary structure, heterotetramer of 2 MoaD subunits and 2 MoaE subunits. Also stable as homodimer. The enzyme changes between these two forms during catalysis.

The enzyme catalyses 2 [molybdopterin-synthase sulfur-carrier protein]-C-terminal-Gly-aminoethanethioate + cyclic pyranopterin phosphate + H2O = molybdopterin + 2 [molybdopterin-synthase sulfur-carrier protein]-C-terminal Gly-Gly + 2 H(+). The protein operates within cofactor biosynthesis; molybdopterin biosynthesis. In terms of biological role, converts molybdopterin precursor Z into molybdopterin. This requires the incorporation of two sulfur atoms into precursor Z to generate a dithiolene group. The sulfur is provided by MoaD. The protein is Molybdopterin synthase catalytic subunit (moaE) of Staphylococcus epidermidis (strain ATCC 35984 / DSM 28319 / BCRC 17069 / CCUG 31568 / BM 3577 / RP62A).